Consider the following 249-residue polypeptide: Probable phosphatase Shal_1519 (249 aa).

Zn(2+) contacts are provided by His-8, His-10, His-16, His-41, Glu-74, His-102, His-132, Asp-193, and His-195.

The protein belongs to the PHP family. Zn(2+) is required as a cofactor.

This Shewanella halifaxensis (strain HAW-EB4) protein is Probable phosphatase Shal_1519.